Here is a 372-residue protein sequence, read N- to C-terminus: MPLPDFHVSEPFTLGIELEMQVVNPPGYDLSQDSSMLIDTVKNQITAGEVKHDITESMLELATDVCRDINQAAGQFSAMQKVVLQAAADHHLEICGGGTHPFQKWQRQEVCDNERYQRTLENFGYLIQQATVFGQHVHVGCASGDDAIYLLHGLSRFVPHFIALSAASPYMQGTDTRFASSRPNIFSAFPDNGPMPWVSNWQQFEALFRCLSYTTMIDSIKDLHWDIRPSPHFGTVEVRVMDTPLTLSHAVNMAGLIQATAHWLLTERPFKHQEKDYLMYKFNRFQACRYGLEGVITDPHTGDRRSLTEATLRLLEKIAPSAHKIGASSAIEALHRQVVSGLNEAQLMRDFVADGGSLIGLVKKHCEIWAGE.

It belongs to the glutamate--cysteine ligase type 2 family. YbdK subfamily. Homodimer.

The enzyme catalyses L-cysteine + L-glutamate + ATP = gamma-L-glutamyl-L-cysteine + ADP + phosphate + H(+). Its function is as follows. ATP-dependent carboxylate-amine ligase which exhibits weak glutamate--cysteine ligase activity. This is Putative glutamate--cysteine ligase 2 (ybdK) from Escherichia coli O81 (strain ED1a).